We begin with the raw amino-acid sequence, 165 residues long: Urease accessory protein UreE (165 aa).

It belongs to the UreE family.

The protein localises to the cytoplasm. Functionally, involved in urease metallocenter assembly. Binds nickel. Probably functions as a nickel donor during metallocenter assembly. The chain is Urease accessory protein UreE from Flavobacterium johnsoniae (strain ATCC 17061 / DSM 2064 / JCM 8514 / BCRC 14874 / CCUG 350202 / NBRC 14942 / NCIMB 11054 / UW101) (Cytophaga johnsonae).